We begin with the raw amino-acid sequence, 382 residues long: Secreted triacylglycerol lipase LIP5 (382 aa).

Cys40 and Cys211 are joined by a disulfide. An N-linked (GlcNAc...) asparagine glycan is attached at Asn115. Ser124 (nucleophile) is an active-site residue. Asn157 and Asn232 each carry an N-linked (GlcNAc...) asparagine glycan. Residues Asp271 and His305 contribute to the active site. Asn346 carries N-linked (GlcNAc...) asparagine glycosylation.

It belongs to the AB hydrolase superfamily. Lipase family. Class Lip subfamily.

The protein resides in the secreted. The enzyme catalyses a triacylglycerol + H2O = a diacylglycerol + a fatty acid + H(+). It carries out the reaction a monoacylglycerol + H2O = glycerol + a fatty acid + H(+). The catalysed reaction is a diacylglycerol + H2O = a monoacylglycerol + a fatty acid + H(+). Its function is as follows. Secreted lipase that hydrolyzes acylglycerol lipids such as triacylglycerols and consequently releases free fatty acid. Can hydrolyze 4-nitrophenyl palmitate to release 4-nitrophenol and palmitoic acid. Due to an absence of fatty acid synthase genes in Malassezia species, secretory lipases are essential for the yeast to generate free fatty acids from degradation of sebum and assimilate them as lipid sources for growth. Plays important roles not only in lipid metabolism but also in the immune response of host cells and pathogenesis. The polypeptide is Secreted triacylglycerol lipase LIP5 (Malassezia furfur (Pityriasis versicolor infection agent)).